Reading from the N-terminus, the 58-residue chain is Probable ferredoxin (58 aa).

4Fe-4S ferredoxin-type domains lie at 2 to 30 (VAKV…LNDD) and 31 to 58 (GIAT…ITIE). 8 residues coordinate [4Fe-4S] cluster: cysteine 10, cysteine 13, cysteine 16, cysteine 20, cysteine 40, cysteine 43, cysteine 46, and cysteine 50.

It depends on [4Fe-4S] cluster as a cofactor.

Ferredoxins are iron-sulfur proteins that transfer electrons in a wide variety of metabolic reactions. This Methanosarcina thermophila protein is Probable ferredoxin.